The following is a 393-amino-acid chain: S-adenosylmethionine synthase (393 aa).

A Mg(2+)-binding site is contributed by Glu-9. His-15 contacts ATP. A K(+)-binding site is contributed by Glu-43. Residues Glu-56 and Gln-99 each contribute to the L-methionine site. ATP contacts are provided by residues 167–169, 235–238, Asp-246, 252–253, Ala-269, Lys-273, and Lys-277; these read HGK, SGRF, and RK. Residue Asp-246 participates in L-methionine binding. Lys-277 serves as a coordination point for L-methionine.

Belongs to the AdoMet synthase family. Homotetramer. It depends on Mn(2+) as a cofactor. The cofactor is Mg(2+). Requires Co(2+) as cofactor. K(+) is required as a cofactor. As to expression, root.

It localises to the cytoplasm. The enzyme catalyses L-methionine + ATP + H2O = S-adenosyl-L-methionine + phosphate + diphosphate. The protein operates within amino-acid biosynthesis; S-adenosyl-L-methionine biosynthesis; S-adenosyl-L-methionine from L-methionine: step 1/1. Catalyzes the formation of S-adenosylmethionine from methionine and ATP. The reaction comprises two steps that are both catalyzed by the same enzyme: formation of S-adenosylmethionine (AdoMet) and triphosphate, and subsequent hydrolysis of the triphosphate. The protein is S-adenosylmethionine synthase (METK) of Pinus banksiana (Jack pine).